Consider the following 204-residue polypeptide: Small ribosomal subunit protein uS4c (204 aa).

The S4 RNA-binding domain maps to 90 to 150 (MRLDNILYRL…GKKTDQLKTI (61 aa)).

Belongs to the universal ribosomal protein uS4 family. As to quaternary structure, part of the 30S ribosomal subunit. Contacts protein S5. The interaction surface between S4 and S5 is involved in control of translational fidelity.

The protein resides in the plastid. The protein localises to the chloroplast. One of the primary rRNA binding proteins, it binds directly to 16S rRNA where it nucleates assembly of the body of the 30S subunit. Functionally, with S5 and S12 plays an important role in translational accuracy. The chain is Small ribosomal subunit protein uS4c (rps4) from Gnetum parvifolium (Small-leaved jointfir).